The sequence spans 541 residues: Membrane protein insertase YidC (541 aa).

Transmembrane regions (helical) follow at residues 6-26, 326-346, 349-369, 420-440, 457-477, and 500-520; these read NLLL…WESD, VVDY…LMFF, LVHN…GLLY, GGCL…WVLL, LSVQ…MWAM, and MIFT…WLVG.

Belongs to the OXA1/ALB3/YidC family. Type 1 subfamily. In terms of assembly, interacts with the Sec translocase complex via SecD. Specifically interacts with transmembrane segments of nascent integral membrane proteins during membrane integration.

It is found in the cell inner membrane. Functionally, required for the insertion and/or proper folding and/or complex formation of integral membrane proteins into the membrane. Involved in integration of membrane proteins that insert both dependently and independently of the Sec translocase complex, as well as at least some lipoproteins. Aids folding of multispanning membrane proteins. In Shewanella amazonensis (strain ATCC BAA-1098 / SB2B), this protein is Membrane protein insertase YidC.